We begin with the raw amino-acid sequence, 275 residues long: Chlorobenzene dihydrodiol dehydrogenase (275 aa).

The active-site Proton acceptor is Tyr155.

Belongs to the short-chain dehydrogenases/reductases (SDR) family.

It catalyses the reaction (1R,2R)-3-chlorocyclohexa-3,5-diene-1,2-diol + NAD(+) = 3-chlorocatechol + NADH + H(+). The protein operates within aromatic compound metabolism. In terms of biological role, can transform various dihydrodiols of chlorobenzenes and chlorotoluenes into the respective catechols. The polypeptide is Chlorobenzene dihydrodiol dehydrogenase (Cupriavidus sp. (strain PS12)).